The following is a 921-amino-acid chain: MSTKVRKCKEQARVTFPAPEEEEDEGEDEGAEPQRRRRGWRGVNGGLEPRSAPSQREPHGYCPPPFSHGPDLSMEGSPSLRRMTVMREKGRRQAVRGPAFMFNDRGTSLTAEEERFLDAAEYGNIPVVRKMLEESKTLNVNCVDYMGQNALQLAVGNEHLEVTELLLKKENLARIGDALLLAISKGYVRIVEAILNHPGFAASKRLTLSPCEQELQDDDFYAYDEDGTRFSPDITPIILAAHCQKYEVVHMLLMKGARIERPHDYFCKCGDCMEKQRHDSFSHSRSRINAYKGLASPAYLSLSSEDPVLTALELSNELAKLANIEKEFKNDYRKLSMQCKDFVVGVLDLCRDSEEVEAILNGDLESAEPLEVHRHKASLSRVKLAIKYEVKKFVAHPNCQQQLLTIWYENLSGLREQTIAIKCLVVLVVALGLPFLAIGYWIAPCSRLGKILRSPFMKFVAHAASFIIFLGLLVFNASDRFEGITTLPNITVTDYPKQIFRVKTTQFTWTEMLIMVWVLGMMWSECKELWLEGPREYILQLWNVLDFGMLSIFIAAFTARFLAFLQATKAQQYVDSYVQESDLSEVTLPPEIQYFTYARDKWLPSDPQIISEGLYAIAVVLSFSRIAYILPANESFGPLQISLGRTVKDIFKFMVLFIMVFFAFMIGMFILYSYYLGAKVNAAFTTVEESFKTLFWSIFGLSEVTSVVLKYDHKFIENIGYVLYGIYNVTMVVVLLNMLIAMINSSYQEIEDDSDVEWKFARSKLWLSYFDDGKTLPPPFSLVPSPKSFVYFIMRIVNFPKCRRRRLQKDIEMGMGNSKSRLNLFTQSNSRVFESHSFNSILNQPTRYQQIMKRLIKRYVLKAQVDKENDEVNEGELKEIKQDISSLRYELLEDKSQATEELAILIHKLSEKLNPSMLRCE.

The tract at residues 1-73 (MSTKVRKCKE…PPFSHGPDLS (73 aa)) is disordered. Residues 1-459 (MSTKVRKCKE…KILRSPFMKF (459 aa)) are Cytoplasmic-facing. Positions 19–31 (PEEEEDEGEDEGA) are enriched in acidic residues. ANK repeat units follow at residues 111–140 (AEEERFLDAAEYGNIPVVRKMLEESKTLNV), 146–175 (MGQNALQLAVGNEHLEVTELLLKKENLARI), 177–203 (DALLLAISKGYVRIVEAILNHPGFAAS), and 232–261 (PDITPIILAAHCQKYEVVHMLLMKGARIER). Glu158 contributes to the Ca(2+) binding site. Residues 460–477 (VAHAASFIIFLGLLVFNA) traverse the membrane as a helical segment. Over 478 to 508 (SDRFEGITTLPNITVTDYPKQIFRVKTTQFT) the chain is Extracellular. Asn489 carries N-linked (GlcNAc...) asparagine glycosylation. The chain crosses the membrane as a helical span at residues 509-527 (WTEMLIMVWVLGMMWSECK). Ca(2+)-binding residues include Glu525, Glu528, and Asn543. At 528-540 (ELWLEGPREYILQ) the chain is on the cytoplasmic side. The helical transmembrane segment at 541-562 (LWNVLDFGMLSIFIAAFTARFL) threads the bilayer. Residues 563–606 (AFLQATKAQQYVDSYVQESDLSEVTLPPEIQYFTYARDKWLPSD) are Extracellular-facing. The helical transmembrane segment at 607 to 630 (PQIISEGLYAIAVVLSFSRIAYIL) threads the bilayer. The Cytoplasmic segment spans residues 631 to 649 (PANESFGPLQISLGRTVKD). An ANK 5 repeat occupies 634–663 (ESFGPLQISLGRTVKDIFKFMVLFIMVFFA). A helical membrane pass occupies residues 650 to 673 (IFKFMVLFIMVFFAFMIGMFILYS). At 674 to 713 (YYLGAKVNAAFTTVEESFKTLFWSIFGLSEVTSVVLKYDH) the chain is on the extracellular side. A helical transmembrane segment spans residues 714–739 (KFIENIGYVLYGIYNVTMVVVLLNML). Residues 740–921 (IAMINSSYQE…KLNPSMLRCE (182 aa)) are Cytoplasmic-facing. Residues 850 to 870 (QIMKRLIKRYVLKAQVDKEND) are binds to IP3R3. Positions 871, 874, 876, and 883 each coordinate Ca(2+).

Belongs to the transient receptor (TC 1.A.4) family. STrpC subfamily. TRPC3 sub-subfamily. In terms of assembly, homotetramer. Interacts with ITPR1. Interacts with ITPR3. Interacts with MX1. Interacts with RNF24. Interacts with JPH2; the interaction is involved in maintaining Ca(2+) homeostasis in skeletal muscle and is mediated by JPH2 'Ser-165' phosphorylation. Interacts with isoform short of TRPC1. In terms of tissue distribution, expressed predominantly in brain and at much lower levels in ovary, colon, small intestine, lung, prostate, placenta and testis.

It is found in the cell membrane. The enzyme catalyses Ca(2+)(in) = Ca(2+)(out). Activated by diacylglycerol (DAG) in a membrane-delimited fashion, independently of protein kinase C. Activated by inositol 1,4,5-triphosphate receptors (ITPR) with bound IP3. May be activated by internal calcium store depletion. Inhibited by intracellular Ca(2+). Forms a receptor-activated non-selective calcium permeant cation channel. Functionally, forms a receptor-activated non-selective calcium permeant cation channel. May be operated by a phosphatidylinositol second messenger system activated by receptor tyrosine kinases or G-protein coupled receptors. The chain is Short transient receptor potential channel 3 (TRPC3) from Homo sapiens (Human).